Reading from the N-terminus, the 262-residue chain is Malonyl-[acyl-carrier protein] O-methyltransferase (262 aa).

Belongs to the methyltransferase superfamily.

The catalysed reaction is malonyl-[ACP] + S-adenosyl-L-methionine = malonyl-[ACP] methyl ester + S-adenosyl-L-homocysteine. It participates in cofactor biosynthesis; biotin biosynthesis. Its function is as follows. Converts the free carboxyl group of a malonyl-thioester to its methyl ester by transfer of a methyl group from S-adenosyl-L-methionine (SAM). It allows to synthesize pimeloyl-ACP via the fatty acid synthetic pathway. The polypeptide is Malonyl-[acyl-carrier protein] O-methyltransferase (Dechloromonas aromatica (strain RCB)).